The chain runs to 441 residues: Putative transporter AmpG 1 (441 aa).

12 helical membrane passes run 5 to 25 (SHLL…MITG), 42 to 62 (IGIL…APIF), 78 to 98 (LSWI…FSFL), 104 to 124 (LVLF…QDTI), 143 to 163 (GIYI…AIYL), 171 to 191 (EIYK…IVAA), 249 to 269 (SGND…LVLY), 297 to 317 (VGKF…GFIM), 325 to 345 (SIFL…FLEI), 352 to 372 (LLFI…TAYI), 390 to 410 (FLSS…GYMV), and 413 to 433 (FGWQ…LLIL).

This sequence belongs to the major facilitator superfamily.

It localises to the cell inner membrane. The sequence is that of Putative transporter AmpG 1 (ampG1) from Rickettsia felis (strain ATCC VR-1525 / URRWXCal2) (Rickettsia azadi).